The sequence spans 57 residues: UPF0391 membrane protein NE0130 (57 aa).

2 helical membrane-spanning segments follow: residues 1-21 and 33-53; these read MLKWAIIFAIISFISGVFGFR and FLFFLFALITLVLLVLGLLGI.

It belongs to the UPF0391 family.

Its subcellular location is the cell membrane. This chain is UPF0391 membrane protein NE0130, found in Nitrosomonas europaea (strain ATCC 19718 / CIP 103999 / KCTC 2705 / NBRC 14298).